The chain runs to 550 residues: CCR4-NOT transcription complex subunit 6-like-A (550 aa).

A required for interaction with cnot1, cnot3 and cnot7 region spans residues M1–K148. LRR repeat units lie at residues H52–L73, N75–V96, S98–F120, and R121–P143. Residues M153 to R550 are nuclease domain. E235 is a binding site for Mg(2+). The substrate site is built by E235, E271, H355, and P360. Position 405 (D405) interacts with Mg(2+). D405 (proton donor/acceptor) is an active-site residue. Substrate is bound by residues N407, N474, and F479.

Belongs to the CCR4/nocturin family. In terms of assembly, component of the CCR4-NOT complex. Mg(2+) is required as a cofactor.

Its subcellular location is the cytoplasm. It is found in the nucleus. It carries out the reaction Exonucleolytic cleavage of poly(A) to 5'-AMP.. Poly(A) nuclease with 3'-5' RNase activity. Catalytic component of the CCR4-NOT complex which is one of the major cellular mRNA deadenylases and is linked to various cellular processes including bulk mRNA degradation, miRNA-mediated repression, translational repression during translational initiation and general transcription regulation. Additional complex functions may be a consequence of its influence on mRNA expression. This is CCR4-NOT transcription complex subunit 6-like-A (cnot6l-a) from Xenopus laevis (African clawed frog).